The sequence spans 159 residues: Protein NrdI (159 aa).

This sequence belongs to the NrdI family.

Probably involved in ribonucleotide reductase function. The chain is Protein NrdI from Rhodococcus erythropolis (strain PR4 / NBRC 100887).